We begin with the raw amino-acid sequence, 90 residues long: DNA-directed RNA polymerase subunit omega (90 aa).

This sequence belongs to the RNA polymerase subunit omega family. As to quaternary structure, the RNAP catalytic core consists of 2 alpha, 1 beta, 1 beta' and 1 omega subunit. When a sigma factor is associated with the core the holoenzyme is formed, which can initiate transcription.

It catalyses the reaction RNA(n) + a ribonucleoside 5'-triphosphate = RNA(n+1) + diphosphate. Promotes RNA polymerase assembly. Latches the N- and C-terminal regions of the beta' subunit thereby facilitating its interaction with the beta and alpha subunits. The sequence is that of DNA-directed RNA polymerase subunit omega from Streptomyces griseus subsp. griseus (strain JCM 4626 / CBS 651.72 / NBRC 13350 / KCC S-0626 / ISP 5235).